A 365-amino-acid polypeptide reads, in one-letter code: Glucose 1-dehydrogenase 1 (365 aa).

Position 38 (aspartate 38) interacts with Zn(2+). Threonine 40 is a substrate binding site. Residues histidine 63 and glutamate 64 each coordinate Zn(2+). Substrate contacts are provided by glutamate 115 and glutamate 151. Glutamate 151 lines the Zn(2+) pocket. NADP(+) contacts are provided by residues asparagine 182–leucine 185, arginine 207–arginine 208, leucine 272–valine 274, and serine 301–asparagine 303. Asparagine 303 contributes to the substrate binding site.

Belongs to the zinc-containing alcohol dehydrogenase family. Glucose 1-dehydrogenase subfamily. It depends on Zn(2+) as a cofactor.

It carries out the reaction D-glucose + NAD(+) = D-glucono-1,5-lactone + NADH + H(+). It catalyses the reaction D-glucose + NADP(+) = D-glucono-1,5-lactone + NADPH + H(+). Catalyzes the NAD(P)(+)-dependent oxidation of D-glucose to D-gluconate via gluconolactone. Can utilize both NAD(+) and NADP(+) as electron acceptor. Is involved in the degradation of glucose through a modified Entner-Doudoroff pathway. This Haloterrigena turkmenica (strain ATCC 51198 / DSM 5511 / JCM 9101 / NCIMB 13204 / VKM B-1734 / 4k) (Halococcus turkmenicus) protein is Glucose 1-dehydrogenase 1.